Consider the following 450-residue polypeptide: D-inositol 3-phosphate glycosyltransferase (450 aa).

Histidine 26 provides a ligand contact to 1D-myo-inositol 3-phosphate. UDP-N-acetyl-alpha-D-glucosamine contacts are provided by residues 32–33 (QP) and glycine 40. 1D-myo-inositol 3-phosphate contacts are provided by residues 37 to 42 (DAGGMN), lysine 95, tyrosine 128, threonine 152, and arginine 172. UDP-N-acetyl-alpha-D-glucosamine-binding residues include arginine 246, lysine 251, and glutamine 313. Positions 322, 323, and 325 each coordinate Mg(2+). Residues glutamate 335 and glutamate 343 each coordinate UDP-N-acetyl-alpha-D-glucosamine. Mg(2+) is bound at residue threonine 349.

It belongs to the glycosyltransferase group 1 family. MshA subfamily. As to quaternary structure, homodimer.

It catalyses the reaction 1D-myo-inositol 3-phosphate + UDP-N-acetyl-alpha-D-glucosamine = 1D-myo-inositol 2-acetamido-2-deoxy-alpha-D-glucopyranoside 3-phosphate + UDP + H(+). Its function is as follows. Catalyzes the transfer of a N-acetyl-glucosamine moiety to 1D-myo-inositol 3-phosphate to produce 1D-myo-inositol 2-acetamido-2-deoxy-glucopyranoside 3-phosphate in the mycothiol biosynthesis pathway. This Mycolicibacterium vanbaalenii (strain DSM 7251 / JCM 13017 / BCRC 16820 / KCTC 9966 / NRRL B-24157 / PYR-1) (Mycobacterium vanbaalenii) protein is D-inositol 3-phosphate glycosyltransferase.